The chain runs to 125 residues: Cu-Zn superoxide dismutase-like protein OPG175 (125 aa).

The cysteines at positions 52 and 102 are disulfide-linked.

This sequence belongs to the Cu-Zn superoxide dismutase family.

The protein resides in the virion. It localises to the host cytoplasm. Its function is as follows. Superoxide dismutase-like protein with no enzymatic activity. The polypeptide is Cu-Zn superoxide dismutase-like protein OPG175 (OPG175) (Homo sapiens (Human)).